A 457-amino-acid chain; its full sequence is Multidrug resistance protein MdtK (457 aa).

Transmembrane regions (helical) follow at residues 11–31, 53–73, 93–113, 127–147, 160–180, 188–208, 243–263, 276–296, 316–336, 357–377, 387–407, and 416–436; these read LLALGIPVIIAQFSQTAMGVV, IWLPTILLGQGILMALTPIVA, WLATFLSIMVIAILYNSRFII, AIGFIHAIMWGAPGCLYYQVL, GMIIGFIGLLINIPVNYAFIY, LGGIGCGVATASVFWAMFLMM, LPVGLALFFEVTLFAVVALLV, IALNFSSLMFMFPLSLGIAAT, ITALAVGLMLASCTAIFSIIF, LMLFAALYQLSDSVQVIGSGV, IFFITFIAYWVIGLPSGYLLG, and MGPAGFWIGFILGLTASAIMM.

The protein belongs to the multi antimicrobial extrusion (MATE) (TC 2.A.66.1) family. MdtK subfamily.

It is found in the cell inner membrane. Functionally, multidrug efflux pump that functions probably as a Na(+)/drug antiporter. This is Multidrug resistance protein MdtK from Proteus mirabilis (strain HI4320).